The sequence spans 670 residues: PML-RARA-regulated adapter molecule 1 (670 aa).

Residues 1–561 (MAHHLPAAME…PQQLPPMDPK (561 aa)) form a disordered region. Residues 31–43 (DLPKKPPKPEFGK) are compositionally biased toward basic and acidic residues. Tandem repeats lie at residues 70 to 81 (KPPPPEVTDLPK), 82 to 93 (KPPPPEVTDLPK), 94 to 105 (KPPPPEVTDLPK), and 106 to 117 (KPPPPEVTDLPK). A 4 X 12 AA repeats of K-P-P-[PQ]-P-[EQ]-[VAF]-T-D-L-P-K region spans residues 70–165 (KPPPPEVTDL…SLPEPGAPAR (96 aa)). Basic and acidic residues predominate over residues 114-129 (DLPKKPSKLELSDLSK). Position 340 is a phosphoserine (Ser-340). A compositionally biased stretch (low complexity) spans 386-398 (SSASESSLPAAVA). Residues 454-463 (PAKPPLPPGP) are compositionally biased toward pro residues. The span at 504–514 (EIYELYDDVEP) shows a compositional bias: acidic residues. A compositionally biased stretch (basic and acidic residues) spans 515–528 (RDDSSPSPKGRDEA). In terms of domain architecture, SH3 spans 571-649 (KAEREFRKKF…PRTALLPLET (79 aa)).

As to quaternary structure, interacts with SKAP2, LCP2 and DBNL. May interact with LYN. Interacts with NEK6. Post-translationally, may be phosphorylated on tyrosines. As to expression, expressed in peripheral blood leukocytes and bone marrow. Expressed in monocytes, and to a lesser extent in granulocytes and lymphocytes. Not expressed in non hematopoietic tissues except in lung.

May be involved in myeloid differentiation. May be involved in integrin signaling in neutrophils. Binds to PtdIns(4)P. The chain is PML-RARA-regulated adapter molecule 1 (PRAM1) from Homo sapiens (Human).